The following is a 549-amino-acid chain: Glucose-6-phosphate isomerase (549 aa).

The active-site Proton donor is the glutamate 353. Residues histidine 384 and lysine 513 contribute to the active site.

It belongs to the GPI family.

It localises to the cytoplasm. The catalysed reaction is alpha-D-glucose 6-phosphate = beta-D-fructose 6-phosphate. It participates in carbohydrate biosynthesis; gluconeogenesis. The protein operates within carbohydrate degradation; glycolysis; D-glyceraldehyde 3-phosphate and glycerone phosphate from D-glucose: step 2/4. Its function is as follows. Catalyzes the reversible isomerization of glucose-6-phosphate to fructose-6-phosphate. The protein is Glucose-6-phosphate isomerase of Brucella melitensis biotype 2 (strain ATCC 23457).